The following is a 454-amino-acid chain: Retinoblastoma-binding protein homolog 5 (454 aa).

6 WD repeats span residues 23–64 (LQNA…RTFS), 65–104 (AHCLPVSCLSWSRDGRKLLTSSADNSIAMFDVLAGTLLHR), 153–192 (SSDESASCVSYDRKGKYIIAGTGKGKLLIYNAETLKCVAW), 196–235 (NTVQQIRQIIVPMKSRFIITNTQDRVIRTYELEDLLHQRG), 248–288 (VNKA…LIKI), and 292–330 (NKGEALLDVQWHPTRPIILSIAQGTVSMWTQAHVENWSA).

Component of the SET2 complex (also known as the SET1/COMPASS complex), which contains at least set-2, swd-2.1, cfp-1, rbbp-5, wdr-5.1, dpy-30 and ash-2.

It localises to the nucleus. Required for di- and trimethylation at 'Lys-4' of histone H3. Regulates left/right asymmetry of ASE sensory neurons, via its role as a component of the SET2 complex. The chain is Retinoblastoma-binding protein homolog 5 (rbbp-5) from Caenorhabditis elegans.